The primary structure comprises 358 residues: tRNA (guanine-N(7)-)-methyltransferase (358 aa).

A disordered region spans residues Met1–Asp29. S-adenosyl-L-methionine-binding positions include Gly99 and Glu122–Ile123. Residues Thr151–Thr186 are compositionally biased toward low complexity. The segment at Thr151 to Thr194 is disordered. Residues Asn209 to Thr210 and Cys229 each bind S-adenosyl-L-methionine. Residue Asp232 is part of the active site. Thr330–Glu332 is an S-adenosyl-L-methionine binding site.

The protein belongs to the class I-like SAM-binding methyltransferase superfamily. TrmB family. As to quaternary structure, forms a complex with trm82.

Its subcellular location is the nucleus. It carries out the reaction guanosine(46) in tRNA + S-adenosyl-L-methionine = N(7)-methylguanosine(46) in tRNA + S-adenosyl-L-homocysteine. It participates in tRNA modification; N(7)-methylguanine-tRNA biosynthesis. Its function is as follows. Catalyzes the formation of N(7)-methylguanine at position 46 (m7G46) in tRNA. The polypeptide is tRNA (guanine-N(7)-)-methyltransferase (trm8) (Aspergillus fumigatus (strain CBS 144.89 / FGSC A1163 / CEA10) (Neosartorya fumigata)).